The primary structure comprises 155 residues: Transcriptional repressor NrdR (155 aa).

The segment at Met-1 to Gly-22 is disordered. A zinc finger spans residues Cys-3–Cys-34. Residues Gly-7–Gly-22 show a composition bias toward basic and acidic residues. Positions Ile-49–Asp-139 constitute an ATP-cone domain.

It belongs to the NrdR family. Zn(2+) is required as a cofactor.

Its function is as follows. Negatively regulates transcription of bacterial ribonucleotide reductase nrd genes and operons by binding to NrdR-boxes. This chain is Transcriptional repressor NrdR, found in Phenylobacterium zucineum (strain HLK1).